Here is a 340-residue protein sequence, read N- to C-terminus: Protein RecA (340 aa).

Gly-65–Thr-72 contacts ATP.

Belongs to the RecA family.

Its subcellular location is the cytoplasm. In terms of biological role, can catalyze the hydrolysis of ATP in the presence of single-stranded DNA, the ATP-dependent uptake of single-stranded DNA by duplex DNA, and the ATP-dependent hybridization of homologous single-stranded DNAs. It interacts with LexA causing its activation and leading to its autocatalytic cleavage. This is Protein RecA from Thermus thermophilus (strain ATCC 27634 / DSM 579 / HB8).